We begin with the raw amino-acid sequence, 360 residues long: UDP-N-acetylglucosamine--N-acetylmuramyl-(pentapeptide) pyrophosphoryl-undecaprenol N-acetylglucosamine transferase (360 aa).

Residues S198 and Q289 each contribute to the UDP-N-acetyl-alpha-D-glucosamine site.

It belongs to the glycosyltransferase 28 family. MurG subfamily.

Its subcellular location is the cell membrane. The catalysed reaction is Mur2Ac(oyl-L-Ala-gamma-D-Glu-L-Lys-D-Ala-D-Ala)-di-trans,octa-cis-undecaprenyl diphosphate + UDP-N-acetyl-alpha-D-glucosamine = beta-D-GlcNAc-(1-&gt;4)-Mur2Ac(oyl-L-Ala-gamma-D-Glu-L-Lys-D-Ala-D-Ala)-di-trans,octa-cis-undecaprenyl diphosphate + UDP + H(+). Its pathway is cell wall biogenesis; peptidoglycan biosynthesis. In terms of biological role, cell wall formation. Catalyzes the transfer of a GlcNAc subunit on undecaprenyl-pyrophosphoryl-MurNAc-pentapeptide (lipid intermediate I) to form undecaprenyl-pyrophosphoryl-MurNAc-(pentapeptide)GlcNAc (lipid intermediate II). The protein is UDP-N-acetylglucosamine--N-acetylmuramyl-(pentapeptide) pyrophosphoryl-undecaprenol N-acetylglucosamine transferase of Streptococcus pyogenes serotype M5 (strain Manfredo).